The sequence spans 1410 residues: non-specific serine/threonine protein kinase (1410 aa).

The Protein kinase domain maps to 27–299; that stretch reads THYVSQLNNS…LLEKYRTIYF (273 aa). ATP contacts are provided by residues 33-41 and K54; that span reads LNNSRFLKT. The active-site Proton acceptor is the D147. HEAT repeat units lie at residues 441 to 478, 485 to 525, 556 to 594, 596 to 633, and 635 to 672; these read TKLDRTLPYLVAALEDDSTRVKVMAMNCVTTLIKEVKH, NIFV…KANL, RKLQQLFEDLTVSILTDPEISVKVALLKNILPLCKYFGR, KTNDVILSHLITYLNDRDPALRMYLVECISGIAILLGP, and TMEQYILPLIIQTITDEEELVVVSVLKNLKDLLKTRFV. WD repeat units follow at residues 1037–1076, 1187–1226, and 1230–1273; these read FDGTLLQSEVLLGTKSFMIYGSDQGALTVWDIDRLANEKS, ADYGCTISMVLDDKNNLLFFGTVSGIIEMWDARYFVQIRA, and GESL…CKHV.

Belongs to the protein kinase superfamily. Ser/Thr protein kinase family. As to quaternary structure, component of the autophagy-specific VPS34 PI3-kinase complex I composed of VPS15, VPS30, VPS34, ATG14 and ATG38; and of the VPS34 PI3-kinase complex II composed of VPS15, VPS30, VPS34 and VPS38. Post-translationally, autophosphorylated.

The protein resides in the golgi apparatus. The protein localises to the trans-Golgi network membrane. Its subcellular location is the endosome membrane. It carries out the reaction L-seryl-[protein] + ATP = O-phospho-L-seryl-[protein] + ADP + H(+). The enzyme catalyses L-threonyl-[protein] + ATP = O-phospho-L-threonyl-[protein] + ADP + H(+). In terms of biological role, serine/threonine-protein kinase that plays a role in signaling in modulation of host immune response, intracellular survival and virulence. Required for impediment of phagosomal maturation in THP-1 macrophages. Regulatory subunit of the autophagy-specific VPS34 PI3-kinase complex I essential to recruit the ATG8-phosphatidylinositol conjugate and the ATG12-ATG5 conjugate to the pre-autophagosomal structure. Within the PS34 PI3-kinase complex I, VPS15-mediated phosphorylation of VPS34 may be required for recruiting VPS34 to the membrane but not for activation of its PI3K activity. Is also involved in endosome-to-Golgi retrograde transport as part of the VPS34 PI3-kinase complex II. This second complex is required for the endosome-to-Golgi retrieval of PEP1 and KEX2, and the recruitment of VPS5 and VPS7, two components of the retromer complex, to endosomal membranes (probably through the synthesis of a specific pool of phosphatidylinositol 3-phosphate recruiting the retromer to the endosomes). By regulating VPS34 kinase activity, VPS15 appears to be essential for the efficient delivery of soluble hydrolases to the yeast vacuole. This chain is non-specific serine/threonine protein kinase, found in Candida glabrata (strain ATCC 2001 / BCRC 20586 / JCM 3761 / NBRC 0622 / NRRL Y-65 / CBS 138) (Yeast).